The chain runs to 100 residues: Co-chaperonin GroES (100 aa).

The protein belongs to the GroES chaperonin family. Heptamer of 7 subunits arranged in a ring. Interacts with the chaperonin GroEL.

The protein localises to the cytoplasm. Together with the chaperonin GroEL, plays an essential role in assisting protein folding. The GroEL-GroES system forms a nano-cage that allows encapsulation of the non-native substrate proteins and provides a physical environment optimized to promote and accelerate protein folding. GroES binds to the apical surface of the GroEL ring, thereby capping the opening of the GroEL channel. The sequence is that of Co-chaperonin GroES from Mycobacterium tuberculosis (strain CDC 1551 / Oshkosh).